The primary structure comprises 147 residues: uncharacterized protein (147 aa).

It belongs to the limonene-1,2-epoxide hydrolase family.

This is an uncharacterized protein from Bacillus subtilis (strain 168).